Reading from the N-terminus, the 510-residue chain is MNTTETSRAAAPLVLILGLGETGVAAARWYARQGSPLRVTDSRAQPGGLAALQAALADATVEYRLGCGEQFPPDLLDGVAQIVLSPGLVPHESPTRELLEQARERNVEVVGEIELFARALAGLAESREYRPRVLAITGTNGKTTVTALTRQLIEAGGMSARAAGNISPAALAALMDALDQDDLPQVWVLELSSFQLETTRTLAPDAAVVLNVTQDHLDWHGDMQAYAQAKARILKPARLAIVNRDDPLAVAMVESLQALNVRSFGRDVPALVGDMGLELGQGVAWLTACESNDFDEPAPAPRRKKDAPPPTRAGGRMSRLMPVDALRIRGVHNALNALAAMQLARSLDLGWGPMLRTLRDYAGEPHRAELVRSIGDVDYINDSKGTNVGATVAALEGLGQQVVLIAGGQGKGQDFSPLVPVVRRHARAVVLIGVDGAAIGKVLEPTGVPCAAAADMREAVRRAAELAQPGDAVLLSPACASFDMFRNYPHRGEVFAAEVRELALDRGEVA.

Glycine 138–threonine 144 provides a ligand contact to ATP. The interval phenylalanine 294–arginine 316 is disordered.

Belongs to the MurCDEF family.

It localises to the cytoplasm. It catalyses the reaction UDP-N-acetyl-alpha-D-muramoyl-L-alanine + D-glutamate + ATP = UDP-N-acetyl-alpha-D-muramoyl-L-alanyl-D-glutamate + ADP + phosphate + H(+). It functions in the pathway cell wall biogenesis; peptidoglycan biosynthesis. In terms of biological role, cell wall formation. Catalyzes the addition of glutamate to the nucleotide precursor UDP-N-acetylmuramoyl-L-alanine (UMA). The sequence is that of UDP-N-acetylmuramoylalanine--D-glutamate ligase from Bordetella pertussis (strain Tohama I / ATCC BAA-589 / NCTC 13251).